The following is a 152-amino-acid chain: Fibroblast growth factor 1 (152 aa).

An N-acetylalanine modification is found at alanine 2. The propeptide occupies 2-15 (AEGEITTFTALTEK). Asparagine 33 contributes to the heparin binding site. Residues 127 to 143 (KKNGSCKRGPRTHYGQK) are heparin-binding.

Belongs to the heparin-binding growth factors family. As to quaternary structure, monomer. Homodimer. Interacts with FGFR1, FGFR2, FGFR3 and FGFR4. Affinity between fibroblast growth factors (FGFs) and their receptors is increased by heparan sulfate glycosaminoglycans that function as coreceptors. Found in a complex with FGFBP1, FGF1 and FGF2. Interacts with FGFBP1. Part of a Cu(2+)-dependent multiprotein aggregate containing FGF1, S100A13 and SYT1. Interacts with SYT1. Interacts with S100A13. Interacts with LRRC59. Interacts with CSNKA, CSNKB and FIBP. While binding with LRRC59, CSNKA and FIBP seem mutually exclusive, CSNKB and FIBP may cooperatively interact with FGF1. Forms a ternary complex with FGFR1 and ITGAV:ITGB3 and induces the recruitment of PTPN11 to the complex. In the nucleus, phosphorylated by PKC/PRKCD.

The protein localises to the secreted. It localises to the cytoplasm. Its subcellular location is the cell cortex. It is found in the cytosol. The protein resides in the nucleus. Its function is as follows. Plays an important role in the regulation of cell survival, cell division, angiogenesis, cell differentiation and cell migration. Functions as a potent mitogen in vitro. Acts as a ligand for FGFR1 and integrins. Binds to FGFR1 in the presence of heparin leading to FGFR1 dimerization and activation via sequential autophosphorylation on tyrosine residues which act as docking sites for interacting proteins, leading to the activation of several signaling cascades. Binds to integrin ITGAV:ITGB3. Its binding to integrin, subsequent ternary complex formation with integrin and FGFR1, and the recruitment of PTPN11 to the complex are essential for FGF1 signaling. Induces the phosphorylation and activation of FGFR1, FRS2, MAPK3/ERK1, MAPK1/ERK2 and AKT1. Can induce angiogenesis. In Sus scrofa (Pig), this protein is Fibroblast growth factor 1 (FGF1).